Here is a 121-residue protein sequence, read N- to C-terminus: Large ribosomal subunit protein eL18 (121 aa).

Belongs to the eukaryotic ribosomal protein eL18 family.

The protein is Large ribosomal subunit protein eL18 of Methanosphaerula palustris (strain ATCC BAA-1556 / DSM 19958 / E1-9c).